The sequence spans 768 residues: Phosphoribosylformylglycinamidine synthase subunit PurL (768 aa).

His46 is an active-site residue. 2 residues coordinate ATP: Tyr49 and Lys88. Glu90 serves as a coordination point for Mg(2+). Substrate contacts are provided by residues 91 to 94 (SHNH) and Arg113. His92 (proton acceptor) is an active-site residue. Asp114 provides a ligand contact to Mg(2+). Substrate is bound at residue Gln237. Asp265 contacts Mg(2+). Substrate is bound at residue 309–311 (ESQ). ATP is bound by residues Asp514 and Gly551. Asn552 serves as a coordination point for Mg(2+). Ser554 is a binding site for substrate.

Belongs to the FGAMS family. Monomer. Part of the FGAM synthase complex composed of 1 PurL, 1 PurQ and 2 PurS subunits.

The protein localises to the cytoplasm. It catalyses the reaction N(2)-formyl-N(1)-(5-phospho-beta-D-ribosyl)glycinamide + L-glutamine + ATP + H2O = 2-formamido-N(1)-(5-O-phospho-beta-D-ribosyl)acetamidine + L-glutamate + ADP + phosphate + H(+). Its pathway is purine metabolism; IMP biosynthesis via de novo pathway; 5-amino-1-(5-phospho-D-ribosyl)imidazole from N(2)-formyl-N(1)-(5-phospho-D-ribosyl)glycinamide: step 1/2. Part of the phosphoribosylformylglycinamidine synthase complex involved in the purines biosynthetic pathway. Catalyzes the ATP-dependent conversion of formylglycinamide ribonucleotide (FGAR) and glutamine to yield formylglycinamidine ribonucleotide (FGAM) and glutamate. The FGAM synthase complex is composed of three subunits. PurQ produces an ammonia molecule by converting glutamine to glutamate. PurL transfers the ammonia molecule to FGAR to form FGAM in an ATP-dependent manner. PurS interacts with PurQ and PurL and is thought to assist in the transfer of the ammonia molecule from PurQ to PurL. The sequence is that of Phosphoribosylformylglycinamidine synthase subunit PurL from Synechocystis sp. (strain ATCC 27184 / PCC 6803 / Kazusa).